The primary structure comprises 640 residues: Protein argonaute (640 aa).

The segment at 1–100 (MYLNLYEIKI…YIKKKFIDNN (100 aa)) is N-terminal domain. Positions 101 to 153 (FYYKRGNNYISINDKFPLDSNTNVNAHLTYKIKLYKINERYYISVLPKFTFLS) are linker L1. The segment at 154 to 209 (DKPALESPIKSTYLFNIKSGKTFPYISGLNGVLKIDLGENGIKEVLFPENYYFNFT) is PAZ domain. The linker L2 stretch occupies residues 210-291 (SKEAEKFGFS…KYSFYKNDQK (82 aa)). The interval 292–423 (IKIAFFFSSK…YVYKMGNFIP (132 aa)) is mid domain. The tract at residues 424–640 (ECQPYVIRNL…EWKLYIPYMK (217 aa)) is PIWI domain. Active-site residues include D445, E481, D515, and N623. Residue D445 participates in Mn(2+) binding. Residues D515 and N623 each coordinate Mn(2+).

It belongs to the argonaute family. Long pAgo subfamily. Mn(2+) is required as a cofactor.

Functionally, a highly versatile argonaute that uses 5'-phospho- and 5'-OH- guide RNA (gRNA) or DNA (gDNA) to cleave target RNA or ssDNA (tDNA) in all possible combinations; has no detectable activity in the absence of guide. Uses short guide sequences (18-21 nucleotides (nt) on average) to bind complementary target nucleic acids resulting in target cleavage in a site-specific manner. Using 5'-phospho-gRNA or 5'-OH-gRNA the cleavage site is 10 nt downstream of the target residue base-paired with the 5'-end of the gRNA, using 5'-phospho-gDNA the cleavage site is 11 nucleotides (nt) downstream, while with 5'-OH-gDNA the cleavage site is 9 nt downstream. The protein is Protein argonaute of Marinitoga hydrogenitolerans (strain DSM 16785 / JCM 12826 / AT1271).